Here is a 435-residue protein sequence, read N- to C-terminus: Putative magnesium transporter MRS2-H (435 aa).

The interval 19 to 54 (FSSSPESRRCRSVHRVPSRPRPPLAPPARVMGKGNS) is disordered. The next 2 helical transmembrane spans lie at 369–389 (LTLI…AAFA) and 408–428 (FVGA…TYAW).

It belongs to the CorA metal ion transporter (MIT) (TC 1.A.35.5) family.

It localises to the membrane. In terms of biological role, putative magnesium transporter. This is Putative magnesium transporter MRS2-H (MRS2-H) from Oryza sativa subsp. indica (Rice).